The sequence spans 362 residues: DNA replication and repair protein RecF (362 aa).

Residue G30 to T37 participates in ATP binding.

Belongs to the RecF family.

The protein resides in the cytoplasm. Functionally, the RecF protein is involved in DNA metabolism; it is required for DNA replication and normal SOS inducibility. RecF binds preferentially to single-stranded, linear DNA. It also seems to bind ATP. This is DNA replication and repair protein RecF from Proteus mirabilis (strain HI4320).